The sequence spans 485 residues: GlcNAc-binding protein A (485 aa).

The N-terminal stretch at 1 to 29 (MKKQPQKTLLAIALSVVSGTAMSHGYVSA) is a signal peptide. A Chitin-binding type-4 domain is found at 30-200 (VENGVAEARV…SFYNVIDVKF (171 aa)). Positions 437–478 (ADTKVLASDGAIYQCKPFPYSGYCVQWTPTATQYQPGTGSHW) constitute a Chitin-binding type-3 domain.

Belongs to the GbpA family.

The protein resides in the secreted. Probably interacts with GlcNAc residues. May promote attachment to both epithelial cell surfaces and chitin. This Vibrio vulnificus (strain CMCP6) protein is GlcNAc-binding protein A.